Here is a 245-residue protein sequence, read N- to C-terminus: Nodulation protein G (245 aa).

11-35 (VTGASGAIGGAIARVLHAQGAIVGL) contributes to the NAD(+) binding site. S139 contributes to the substrate binding site. Y152 functions as the Proton acceptor in the catalytic mechanism.

Belongs to the short-chain dehydrogenases/reductases (SDR) family.

In terms of biological role, proposed to modify Nod factor fatty acyl chain. The sequence is that of Nodulation protein G (nodG) from Rhizobium meliloti (strain 1021) (Ensifer meliloti).